Reading from the N-terminus, the 112-residue chain is Large ribosomal subunit protein bL17 (112 aa).

This sequence belongs to the bacterial ribosomal protein bL17 family. As to quaternary structure, part of the 50S ribosomal subunit. Contacts protein L32.

This is Large ribosomal subunit protein bL17 from Thermoanaerobacter pseudethanolicus (strain ATCC 33223 / 39E) (Clostridium thermohydrosulfuricum).